Reading from the N-terminus, the 502-residue chain is Cytochrome P450 monooxygenase orf6 (502 aa).

A helical membrane pass occupies residues 3–25 (ALWVLAVALVAYFLCLSIYRLFL). Asn382 carries N-linked (GlcNAc...) asparagine glycosylation. Cys445 contributes to the heme binding site.

Belongs to the cytochrome P450 family. Heme serves as cofactor.

It is found in the membrane. It functions in the pathway mycotoxin biosynthesis. Functionally, cytochrome P450 monooxygenase; part of the gene cluster that mediates the biosynthesis of brefeldin A (BFA), a protein transport inhibitor that shows antiviral, antifungal, and antitumor properties. The proposed biosynthesis of BFA involves formation of an acyclic polyketide chain that is differentially tailored throughout the backbone. The highly reducing polyketide synthase Bref-PKS is proposed to synthesize the precisely reduced octaketide precursor, which could then be directly offloaded by the thiohydrolase enzyme Bref-TH followed by a cytochrome P450 monooxygenase-mediated formation of the cyclopentane ring and macrocyclization to afford 7-deoxy BFA. Alternatively, the first ring annulation can also occur on the ACP-tethered intermediate before the thiohydrolase release and lactonization. The C7-hydroxylation by another cytochrome P450 monooxygenase is believed to be the final step in the process to obtain the final structure of BFA. In addition to the HRPKS Bref-PKS and the thiohydrolase Bref-TH, the brefeldin A biosynthesis cluster contains 4 cytochrome p450 monooxygenases (called orf3 to orf6), as well a the probable cluster-specific transcription regulator orf8. The polypeptide is Cytochrome P450 monooxygenase orf6 (Eupenicillium brefeldianum (Penicillium brefeldianum)).